We begin with the raw amino-acid sequence, 148 residues long: MGDFDGEQKELIKKLVNFRMIDGKRTRVRAIVYKTFHRLARTERDVIKLMVDAVDNIKPICEVVKVGVAGTIYDVPGIVARDRQQTLAIRWILGAAFKRRISYRISLEKCSFAEILDAYRKRGISRKRRENLHGLASTNRSFAHFRWW.

It belongs to the universal ribosomal protein uS7 family. As to quaternary structure, part of the small ribosomal subunit.

It localises to the mitochondrion. Its function is as follows. One of the primary rRNA binding proteins, it binds directly to 18S rRNA where it nucleates assembly of the head domain of the small subunit. In Triticum aestivum (Wheat), this protein is Small ribosomal subunit protein uS7m (RPS7).